The chain runs to 253 residues: Large ribosomal subunit protein uL4 (253 aa).

Positions 61–107 (GWGSGRGTSHVPRLVNSSRAARVPHARGGRRAHPPKPEADRSEKVNT) are disordered. Basic residues predominate over residues 82-94 (RVPHARGGRRAHP). Residues 95–107 (PKPEADRSEKVNT) are compositionally biased toward basic and acidic residues.

The protein belongs to the universal ribosomal protein uL4 family. Part of the 50S ribosomal subunit.

In terms of biological role, one of the primary rRNA binding proteins, this protein initially binds near the 5'-end of the 23S rRNA. It is important during the early stages of 50S assembly. It makes multiple contacts with different domains of the 23S rRNA in the assembled 50S subunit and ribosome. Functionally, forms part of the polypeptide exit tunnel. In Methanosarcina barkeri (strain Fusaro / DSM 804), this protein is Large ribosomal subunit protein uL4.